A 256-amino-acid polypeptide reads, in one-letter code: Glutamate racemase (256 aa).

Substrate is bound by residues 5 to 6 (DS) and 37 to 38 (YG). Cys-69 acts as the Proton donor/acceptor in catalysis. Position 70–71 (70–71 (NT)) interacts with substrate. Residue Cys-181 is the Proton donor/acceptor of the active site. Position 182–183 (182–183 (TH)) interacts with substrate.

This sequence belongs to the aspartate/glutamate racemases family.

The enzyme catalyses L-glutamate = D-glutamate. It participates in cell wall biogenesis; peptidoglycan biosynthesis. Its function is as follows. Provides the (R)-glutamate required for cell wall biosynthesis. The protein is Glutamate racemase of Buchnera aphidicola subsp. Schizaphis graminum (strain Sg).